The primary structure comprises 357 residues: Anthranilate phosphoribosyltransferase (357 aa).

Residues G91, 94–95 (GD), T99, 101–104 (NIST), 119–127 (KHGNRSVSS), and S131 each bind 5-phospho-alpha-D-ribose 1-diphosphate. G91 is a binding site for anthranilate. S103 contacts Mg(2+). N122 lines the anthranilate pocket. R177 contributes to the anthranilate binding site. Mg(2+) contacts are provided by D235 and E236.

The protein belongs to the anthranilate phosphoribosyltransferase family. Homodimer. Requires Mg(2+) as cofactor.

It carries out the reaction N-(5-phospho-beta-D-ribosyl)anthranilate + diphosphate = 5-phospho-alpha-D-ribose 1-diphosphate + anthranilate. It functions in the pathway amino-acid biosynthesis; L-tryptophan biosynthesis; L-tryptophan from chorismate: step 2/5. Its function is as follows. Catalyzes the transfer of the phosphoribosyl group of 5-phosphorylribose-1-pyrophosphate (PRPP) to anthranilate to yield N-(5'-phosphoribosyl)-anthranilate (PRA). The chain is Anthranilate phosphoribosyltransferase from Shewanella baltica (strain OS185).